Reading from the N-terminus, the 514-residue chain is MADAEVIILPKKHKKKKERKSLPEEDVAEIQHAEEFLIKPESKVAKLDTSQWPLLLKNFDKLNVRTTHYTPLACGSNPLKREIGDYIRTGFINLDKPSNPSSHEVVAWIRRILRVEKTGHSGTLDPKVTGCLIVCIERATRLVKSQQSAGKEYVGIVRLHNAIEGGTQLSRALETLTGALFQRPPLIAAVKRQLRVRTIYESKMIEYDPERRLGIFWVSCEAGTYIRTLCVHLGLLLGVGGQMQELRRVRSGVMSEKDHMVTMHDVLDAQWLYDNHKDESYLRRVVYPLEKLLTSHKRLVMKDSAVNAICYGAKIMLPGVLRYEDGIEVNQEIVVITTKGEAICMAIALMTTAVISTCDHGIVAKIKRVIMERDTYPRKWGLGPKASQKKLMIKQGLLDKHGKPTDSTPATWKQEYVDYSESAKKEVVAEVVKAPQVVAEAAKTAKRKRESESESDETPPAAPQLIKKEKKKSKKDKKAKAGLESGAEPGDGDSDTTKKKKKKKKAKEVELVSE.

N-acetylalanine is present on Ala2. Residues 2 to 21 are nucleolar localization; sequence ADAEVIILPKKHKKKKERKS. A Glycyl lysine isopeptide (Lys-Gly) (interchain with G-Cter in SUMO2) cross-link involves residue Lys20. The residue at position 21 (Ser21) is a Phosphoserine. Glycyl lysine isopeptide (Lys-Gly) (interchain with G-Cter in SUMO2) cross-links involve residues Lys39 and Lys43. Catalysis depends on Asp125, which acts as the Nucleophile. Lys191 is covalently cross-linked (Glycyl lysine isopeptide (Lys-Gly) (interchain with G-Cter in SUMO2)). The PUA domain occupies 296–371; the sequence is HKRLVMKDSA…IVAKIKRVIM (76 aa). At Ser387 the chain carries Phosphoserine. Lys394 participates in a covalent cross-link: Glycyl lysine isopeptide (Lys-Gly) (interchain with G-Cter in SUMO2). Residue Lys413 forms a Glycyl lysine isopeptide (Lys-Gly) (interchain with G-Cter in SUMO1); alternate linkage. Lys413 is covalently cross-linked (Glycyl lysine isopeptide (Lys-Gly) (interchain with G-Cter in SUMO2); alternate). Residues Lys424 and Lys433 each participate in a glycyl lysine isopeptide (Lys-Gly) (interchain with G-Cter in SUMO2) cross-link. Positions 443-514 are disordered; the sequence is KTAKRKRESE…KAKEVELVSE (72 aa). The nuclear and nucleolar localization stretch occupies residues 446–514; the sequence is KRKRESESES…KAKEVELVSE (69 aa). 3 positions are modified to phosphoserine: Ser451, Ser453, and Ser455. Position 458 is a phosphothreonine (Thr458). Lys467 is covalently cross-linked (Glycyl lysine isopeptide (Lys-Gly) (interchain with G-Cter in SUMO2)). Over residues 468-480 the composition is skewed to basic residues; sequence KEKKKSKKDKKAK. A phosphoserine mark is found at Ser485, Ser494, and Ser513.

This sequence belongs to the pseudouridine synthase TruB family. In terms of assembly, part of the H/ACA small nucleolar ribonucleoprotein (H/ACA snoRNP) complex, which contains NHP2/NOLA2, GAR1/NOLA1, NOP10/NOLA3, and DKC1/NOLA4, which is presumed to be the catalytic subunit. The complex contains a stable core formed by binding of one or two NOP10-DKC1 heterodimers to NHP2; GAR1 subsequently binds to this core via DKC1. The complex binds a box H/ACA small nucleolar RNA (snoRNA), which may target the specific site of modification within the RNA substrate. During assembly, the complex contains NAF1 instead of GAR1/NOLA1. The complex also interacts with TERC, which contains a 3'-terminal domain related to the box H/ACA snoRNAs. Specific interactions with snoRNAs or TERC are mediated by GAR1 and NHP2. Associates with NOLC1/NOPP140. H/ACA snoRNPs interact with the SMN complex, consisting of SMN1 or SMN2, GEMIN2/SIP1, DDX20/GEMIN3, and GEMIN4. This is mediated by interaction between GAR1 and SMN1 or SMN2. The SMN complex may be required for correct assembly of the H/ACA snoRNP complex. Component of the telomerase holoenzyme complex composed of one molecule of TERT, one molecule of WRAP53/TCAB1, two molecules of H/ACA ribonucleoprotein complex subunits DKC1, NOP10, NHP2 and GAR1, and a telomerase RNA template component (TERC). The telomerase holoenzyme complex is associated with TEP1, SMG6/EST1A and POT1. Interacts with SHQ1; this interaction may lead to the stabilization of DKC1, from the time of its synthesis until its association with NOP10, NHP2, and NAF1 at the nascent H/ACA RNA. Interacts with HMBOX1. Interacts with DHX36. Ubiquitously expressed.

It is found in the nucleus. Its subcellular location is the nucleolus. The protein resides in the cajal body. It localises to the cytoplasm. It carries out the reaction uridine in 5S rRNA = pseudouridine in 5S rRNA. Its function is as follows. Catalytic subunit of H/ACA small nucleolar ribonucleoprotein (H/ACA snoRNP) complex, which catalyzes pseudouridylation of rRNA. This involves the isomerization of uridine such that the ribose is subsequently attached to C5, instead of the normal N1. Each rRNA can contain up to 100 pseudouridine ('psi') residues, which may serve to stabilize the conformation of rRNAs. Required for ribosome biogenesis and telomere maintenance. Also required for correct processing or intranuclear trafficking of TERC, the RNA component of the telomerase reverse transcriptase (TERT) holoenzyme. Promotes cell to cell and cell to substratum adhesion, increases the cell proliferation rate and leads to cytokeratin hyper-expression. This is H/ACA ribonucleoprotein complex subunit DKC1 from Homo sapiens (Human).